The chain runs to 20 residues: Brevinin-1SPd (20 aa).

Cysteines 14 and 20 form a disulfide.

Expressed by the skin glands.

The protein localises to the secreted. Antimicrobial peptide with activity against Gram-negative and Gram-positive bacteria (MIC=13 uM against E.coli, MIC=3 uM against S.aureus) and fungi (MIC=3 uM against C.albicans). Shows hemolytic activity on human erythrocytes (HC(50)=8 uM). The protein is Brevinin-1SPd of Lithobates septentrionalis (Mink frog).